A 354-amino-acid chain; its full sequence is Rhodopsin (354 aa).

Residues Met1–Gln36 are Extracellular-facing. Asn2 and Asn15 each carry an N-linked (GlcNAc...) asparagine glycan. A helical membrane pass occupies residues Tyr37–Val61. The Cytoplasmic segment spans residues Thr62–Asn73. A helical membrane pass occupies residues Tyr74–Tyr96. Over Ser97–Cys110 the chain is Extracellular. Residues Cys110 and Cys187 are joined by a disulfide bond. Residues Tyr111–Ile133 traverse the membrane as a helical segment. Residues Glu134–Tyr136 carry the 'Ionic lock' involved in activated form stabilization motif. Residues Glu134 to His152 are Cytoplasmic-facing. Residues Ala153 to Phe173 traverse the membrane as a helical segment. The Extracellular portion of the chain corresponds to Gly174 to Ser202. Residues Phe203 to Gly224 traverse the membrane as a helical segment. Residues Arg225 to Arg252 lie on the Cytoplasmic side of the membrane. The helical transmembrane segment at Met253–Tyr274 threads the bilayer. Residues Ile275 to Ile286 are Extracellular-facing. A helical transmembrane segment spans residues Phe287 to Val308. Lys296 carries the post-translational modification N6-(retinylidene)lysine. The Cytoplasmic portion of the chain corresponds to Leu309–Ala354. Residues Cys322 and Cys323 are each lipidated (S-palmitoyl cysteine). Residues Glu332–Ala354 form a disordered region. Residues Thr334 to Ala354 are compositionally biased toward low complexity.

It belongs to the G-protein coupled receptor 1 family. Opsin subfamily. Contains one covalently linked retinal chromophore. Upon light absorption, the covalently bound 11-cis-retinal is converted to all-trans-retinal. After hydrolysis of the Schiff base and release of the covalently bound all-trans-retinal, active rhodopsin is regenerated by binding of a fresh molecule of 11-cis-retinal.

It is found in the membrane. It localises to the cell projection. Its subcellular location is the cilium. The protein resides in the photoreceptor outer segment. Its function is as follows. Photoreceptor required for image-forming vision at low light intensity. Required for photoreceptor cell viability after birth. Light-induced isomerization of 11-cis to all-trans retinal triggers a conformational change that activates signaling via G-proteins. Subsequent receptor phosphorylation mediates displacement of the bound G-protein alpha subunit by arrestin and terminates signaling. The polypeptide is Rhodopsin (RHO) (Ambystoma tigrinum (Eastern tiger salamander)).